The following is a 529-amino-acid chain: ATP synthase subunit alpha (529 aa).

173 to 180 (GDRQTGKT) is a binding site for ATP.

This sequence belongs to the ATPase alpha/beta chains family. As to quaternary structure, F-type ATPases have 2 components, CF(1) - the catalytic core - and CF(0) - the membrane proton channel. CF(1) has five subunits: alpha(3), beta(3), gamma(1), delta(1), epsilon(1). CF(0) has three main subunits: a(1), b(2) and c(9-12). The alpha and beta chains form an alternating ring which encloses part of the gamma chain. CF(1) is attached to CF(0) by a central stalk formed by the gamma and epsilon chains, while a peripheral stalk is formed by the delta and b chains.

It is found in the cell membrane. It carries out the reaction ATP + H2O + 4 H(+)(in) = ADP + phosphate + 5 H(+)(out). In terms of biological role, produces ATP from ADP in the presence of a proton gradient across the membrane. The alpha chain is a regulatory subunit. This is ATP synthase subunit alpha from Streptomyces lividans.